The sequence spans 476 residues: MTDMAGLMERLERAVIRLEQLSAGLDGPPRGCGEVNGVNGGVAPSVEAFDKLINSMVAEFLKNSRVLAGDVETHAEMVHGAFQAQRAFLLMVSQYQQPQENEVAVLLKPISEKIQEIQTFRERNRGSNMFNHLSAVSESIAALGWIAVSPKPGPYVKEMNDAATFYTNRVLKDYKHSDLRHVDWVRSYLNIWSELQAYIREHHTTGLTWSKTGPVASTASAFSILSSGPGLPPPPPPPPPPGPPPPFENEDKKEEPSPSRSALFAQLNQGEAITKGLRHVTDDKKTYKNPSLRAQGQIRSPTKTHTPSPTSPKSNSPQKHTPVLELEGKKWRVEYQEDRNDLVISETELKQVAYIFKCDKSTLQIKGKVNSITVDNCKKFGLVFDHVVGIVEVINSKDIQIQVMGRVPTISINKTEGCHLYLSEDALDCEIVSAKSSEMNVLVPQDDDYREFPIPEQFKTIWDGSKLVTEPAEIMA.

Positions 223–322 are disordered; sequence SILSSGPGLP…KSNSPQKHTP (100 aa). Positions 230–247 are enriched in pro residues; that stretch reads GLPPPPPPPPPPGPPPPF. Residues 288-299 show a composition bias toward polar residues; it reads KNPSLRAQGQIR. Phosphoserine occurs at positions 300 and 308. A compositionally biased stretch (low complexity) spans 300-317; that stretch reads SPTKTHTPSPTSPKSNSP. The 138-residue stretch at 317 to 454 folds into the C-CAP/cofactor C-like domain; that stretch reads PQKHTPVLEL…QDDDYREFPI (138 aa).

The protein belongs to the CAP family. Expressed in the heart, skeletal muscle, and brain.

It localises to the cell membrane. Its function is as follows. Involved in the regulation of actin polymerization. The chain is Adenylyl cyclase-associated protein 2 (Cap2) from Mus musculus (Mouse).